The sequence spans 1166 residues: Reverse gyrase (1166 aa).

The RG N-terminal-type zinc-finger motif lies at 1 to 40 (MINVMYKNSCPNCGGDISADRLLNGLPCETCLPYINGIDG). Residues C10, C13, C28, and C31 each contribute to the Zn(2+) site. ATP-binding positions include Q92 and 109 to 116 (APTGLGKT). The 190-residue stretch at 96–285 (LRRLVSNQSF…ALRLLTGFEP (190 aa)) folds into the Helicase ATP-binding domain. Positions 190 to 193 (DDAD) match the DEAD box motif. Positions 576–1166 (FNISTGLLIV…VNPLKSEQNV (591 aa)) are topoisomerase I. The 164-residue stretch at 580 to 743 (TGLLIVESPT…NIYRITYHEI (164 aa)) folds into the Toprim domain. Mg(2+) is bound at residue E586. Residues 662 to 689 (IKKCLDCNKTFSIASDKCPYCGSTNVQT) form an RG C-terminal-type zinc finger. C665, C668, C679, and C682 together coordinate Zn(2+). D712 is a binding site for Mg(2+). A Topo IA-type catalytic domain is found at 759–1157 (NTNLVMSQIV…EIFSEISTLV (399 aa)). The O-(5'-phospho-DNA)-tyrosine intermediate role is filled by Y903.

The protein in the N-terminal section; belongs to the DEAD box helicase family. DDVD subfamily. This sequence in the C-terminal section; belongs to the type IA topoisomerase family. Monomer. The cofactor is Zn(2+). Mg(2+) serves as cofactor.

It localises to the cytoplasm. The enzyme catalyses ATP + H2O = ADP + phosphate + H(+). With respect to regulation, inhibited by UV light-induced lesions; substrate is completely cleaved but a nicked form accumulates, suggesting the reaction is blocked between the cleavage and ligation steps. Inhibited by actinomycin D; substrate DNA remains negatively supercoiled in this case. Activity is stimulated by SSB from S.solfataricus strain P2. Positive supercoiling is inhibited by Sul7d (also called Sso7d) from S.solfataricus strain MT4; SSB from S.solfataricus strain P2 relieves this inhibition. In terms of biological role, modifies the topological state of DNA by introducing positive supercoils in an ATP-dependent process. Increases the linking number in steps of +1. In vitro requires high concentrations to supercoil negatively supercoiled DNA, relaxes plasmid DNA first; DNA single-strand binding protein (SSB) from S.solfataricus strain P2 stimulates positive supercoiling. SSB stimulates DNA-binding by reverse gyrase, and thus all subsequent steps. Binds to single-stranded DNA, transiently cleaves and then rejoins the ends, introducing a positive supercoil in the process. The scissile phosphodiester is attacked by the catalytic tyrosine of the enzyme, resulting in the formation of a DNA-(5'-phosphotyrosyl)-enzyme intermediate. May be involved in DNA damage response. Probably involved in rewinding DNA strands in regions of the chromosome that have opened up to allow replication, transcription, DNA repair and/or for DNA protection. In Saccharolobus shibatae (strain ATCC 51178 / DSM 5389 / JCM 8931 / NBRC 15437 / B12) (Sulfolobus shibatae), this protein is Reverse gyrase.